The sequence spans 193 residues: Adenine phosphoribosyltransferase (193 aa).

It belongs to the purine/pyrimidine phosphoribosyltransferase family. As to quaternary structure, homodimer.

The protein localises to the cytoplasm. It carries out the reaction AMP + diphosphate = 5-phospho-alpha-D-ribose 1-diphosphate + adenine. It functions in the pathway purine metabolism; AMP biosynthesis via salvage pathway; AMP from adenine: step 1/1. Catalyzes a salvage reaction resulting in the formation of AMP, that is energically less costly than de novo synthesis. The polypeptide is Adenine phosphoribosyltransferase (Bifidobacterium adolescentis (strain ATCC 15703 / DSM 20083 / NCTC 11814 / E194a)).